A 428-amino-acid polypeptide reads, in one-letter code: MANVTVIGAQWGDEGKGKLVDWLSNRADVVVRFQGGHNAGHTLVVGNQTYKLSLLPSGVVQGKLSIIGNGVVVDPWHLLKEIETLGAQGVSIGPDLLVLADNACLILPLHRDLDQAREAAATNKIGTTGRGIGPAYEDKVGRRAIRVADLHDREALEAKIDRLLAHHTPLRRGLGLPEYDGPALLAELEALAPKILPYARPAWLMLDEIVKAGSRVLFEGAQGALLDVDHGTYPYVTSSNTVAGQAAAGSGLGPKGPGYVLGIVKAYTTRVGEGPFPTELNDEVGQHLGTVGREFGTVTGRSRRCGWFDAALVRQSVALNGIAGIALTKLDVLDGLPTLKICTGYRLGDREIGYLPAGLKAQRELAPVYEEMEGWSETTQGARSWKDLPANAVKYVRRIEELIGAPVALLSTSPQRDDTILMRDPFQD.

GTP is bound by residues 12-18 and 40-42; these read GDEGKGK and GHT. Catalysis depends on Asp13, which acts as the Proton acceptor. Asp13 and Gly40 together coordinate Mg(2+). IMP is bound by residues 13 to 16, 38 to 41, Thr128, Arg142, Gln222, Thr237, and Arg301; these read DEGK and NAGH. The active-site Proton donor is the His41. 297–303 lines the substrate pocket; sequence TVTGRSR. Residues Arg303, 329–331, and 411–413 each bind GTP; these read KLD and STS.

Belongs to the adenylosuccinate synthetase family. As to quaternary structure, homodimer. Mg(2+) serves as cofactor.

It is found in the cytoplasm. It carries out the reaction IMP + L-aspartate + GTP = N(6)-(1,2-dicarboxyethyl)-AMP + GDP + phosphate + 2 H(+). Its pathway is purine metabolism; AMP biosynthesis via de novo pathway; AMP from IMP: step 1/2. Its function is as follows. Plays an important role in the de novo pathway of purine nucleotide biosynthesis. Catalyzes the first committed step in the biosynthesis of AMP from IMP. The protein is Adenylosuccinate synthetase of Phenylobacterium zucineum (strain HLK1).